Reading from the N-terminus, the 353-residue chain is MFVDRLQLLNFRNYEELLIDFSPGKILIYGANGQGKTNLIEAIYYLVIGKSFRGKDNSLIRFGAESFQIGAKISKNGQKTTLGVEYSVKGKFFLKNGQKQKSFSSILGNLKGVLFTPDEPVIFFGFPANRRKALDLFLAQTSKTYLLNLIYYQKVLTNKNALLKQVWNVDNLIEAWNYKLAEFGAEIIKEREKCLKILNDIINELNAQLRFLPGKIEASYKTSGADDKEKIFELLKQKYTEEKDKKQALFGPHRDDLNFYVNGRDLKIFGSQGQKKGALLLFKLSQAVYMAKVSGEKPVVLLDDLYSEFDKEKREALEGFFLKYSDQVFITATEPIDLKNYHQVVFIENGKVS.

30–37 (GANGQGKT) contributes to the ATP binding site.

Belongs to the RecF family.

Its subcellular location is the cytoplasm. Its function is as follows. The RecF protein is involved in DNA metabolism; it is required for DNA replication and normal SOS inducibility. RecF binds preferentially to single-stranded, linear DNA. It also seems to bind ATP. The polypeptide is DNA replication and repair protein RecF (Carboxydothermus hydrogenoformans (strain ATCC BAA-161 / DSM 6008 / Z-2901)).